The sequence spans 233 residues: Nickel import system ATP-binding protein NikE (233 aa).

Residues 2–228 (IELKHVTFGY…DRHPYTKELV (227 aa)) form the ABC transporter domain. Residue 35 to 42 (GESGCGKS) coordinates ATP.

It belongs to the ABC transporter superfamily. In terms of assembly, the complex is composed of two ATP-binding proteins (NikD and NikE), two transmembrane proteins (NikB and NikC) and a solute-binding protein (NikA).

The protein resides in the cell membrane. It catalyses the reaction Ni(2+)(out) + ATP + H2O = Ni(2+)(in) + ADP + phosphate + H(+). Its function is as follows. Part of the ABC transporter complex NikABCDE (Opp2) involved in nickel import. Probably responsible for energy coupling to the transport system. The sequence is that of Nickel import system ATP-binding protein NikE from Staphylococcus aureus (strain Mu50 / ATCC 700699).